The primary structure comprises 158 residues: HTH-type transcriptional repressor NicR (158 aa).

An HTH marR-type domain is found at 20–152 (TEQVGHLLRK…ILYLLRKMID (133 aa)). The H-T-H motif DNA-binding region spans 66-89 (QAELIKATAVDQATIRGIVERLKA).

It functions in the pathway cofactor degradation; nicotinate degradation [regulation]. Transcriptional repressor for the nicCDEFTP and nicXR operons, encoding the lower aerobic nicotinate degradation pathway. Acts under non-induced conditions: repression of the nicCDEFTP and nicXR operons becomes alleviated in presence of 6-hydroxynicotinate (6HNA). The chain is HTH-type transcriptional repressor NicR (nicR) from Pseudomonas putida (strain ATCC 47054 / DSM 6125 / CFBP 8728 / NCIMB 11950 / KT2440).